The primary structure comprises 420 residues: COP9 signalosome complex subunit 11 (420 aa).

The PCI domain maps to 177 to 346 (SIHEHPSLVD…VYYKEDLPVG (170 aa)). The interval 386 to 420 (VEPLNRSQDMDAFELHEQSEDEEYEEEHLEEGENV) is disordered. The span at 404–420 (SEDEEYEEEHLEEGENV) shows a compositional bias: acidic residues.

Component of a COP9 signalosome-like (CSN) complex.

It localises to the cytoplasm. Its subcellular location is the nucleus. Component of the COP9 signalosome (CSN) complex that acts as an regulator of the ubiquitin (Ubl) conjugation pathway by mediating the deneddylation of the cullin subunit of SCF-type E3 ubiquitin-protein ligase complexes The CSN complex is involved in the regulation of the mating pheromone response. PCI8 may also be involved in transcriptional and translational control. The sequence is that of COP9 signalosome complex subunit 11 (PCI8) from Eremothecium gossypii (strain ATCC 10895 / CBS 109.51 / FGSC 9923 / NRRL Y-1056) (Yeast).